The primary structure comprises 515 residues: Carboxyl-terminal-processing peptidase 2, chloroplastic (515 aa).

Residues 198–286 enclose the PDZ domain; that stretch reads FKSLRSGTQG…SAVELAIRSG (89 aa). Residues Ser417 and Lys442 each act as charge relay system in the active site.

The protein belongs to the peptidase S41A family.

The protein resides in the plastid. The protein localises to the chloroplast thylakoid lumen. It carries out the reaction The enzyme shows specific recognition of a C-terminal tripeptide, Xaa-Yaa-Zaa, in which Xaa is preferably Ala or Leu, Yaa is preferably Ala or Tyr, and Zaa is preferably Ala, but then cleaves at a variable distance from the C-terminus. A typical cleavage is -Ala-Ala-|-Arg-Ala-Ala-Lys-Glu-Asn-Tyr-Ala-Leu-Ala-Ala.. Protease involved in the C-terminal processing of the chloroplastic D1 protein of photosystem II. This proteolytic processing is necessary to allow the light-driven assembly of the tetranuclear manganese cluster, which is responsible for photosynthetic water oxidation. The chain is Carboxyl-terminal-processing peptidase 2, chloroplastic (CTPA2) from Arabidopsis thaliana (Mouse-ear cress).